The primary structure comprises 248 residues: MEDTVIVGRHAVREAIITGHPINKILIQEGIKKQQINEILKNAKDQKIIVQTVPKSKLDFLANAPHQGVAALIAPYEYADFDQFLKQQKEKEGLLTVLILDGLEDPHNLGSILRTADATGVDGVIIPKRRSVTLTQTVAKASTGAIEHVPVIRVTNLAKTIDELKDNGFWVAGTEANNATDYRNLEADMSLAIVIGSEGQGMSRLVSDKCDFYIKIPMVGHVNSLNASVAASLMMYEVFRKRHDVGEI.

S-adenosyl-L-methionine contacts are provided by glycine 196, isoleucine 216, and leucine 225.

It belongs to the class IV-like SAM-binding methyltransferase superfamily. RNA methyltransferase TrmH family.

In Staphylococcus aureus (strain COL), this protein is Putative TrmH family tRNA/rRNA methyltransferase.